The sequence spans 400 residues: Cytoplasmic polyadenylated homeobox-like protein 2 (400 aa).

Residues 1–29 (MSSQAFPAEEDHHNEERQTKKKRKTKHRH) form a disordered region. The segment covering 9 to 18 (EEDHHNEERQ) has biased composition (basic and acidic residues). Positions 19 to 29 (TKKKRKTKHRH) are enriched in basic residues. A DNA-binding region (homeobox) is located at residues 24–83 (KTKHRHKFSEELLQELKEIFGENGYPDFTTRKTLANKFDCPVNVINNWFQNNRARLPPEE).

It localises to the nucleus. The sequence is that of Cytoplasmic polyadenylated homeobox-like protein 2 from Homo sapiens (Human).